A 192-amino-acid chain; its full sequence is Ribosomal RNA large subunit methyltransferase E (192 aa).

Positions 46, 48, 63, 79, and 102 each coordinate S-adenosyl-L-methionine. The Proton acceptor role is filled by K142.

Belongs to the class I-like SAM-binding methyltransferase superfamily. RNA methyltransferase RlmE family.

The protein localises to the cytoplasm. It carries out the reaction uridine(2552) in 23S rRNA + S-adenosyl-L-methionine = 2'-O-methyluridine(2552) in 23S rRNA + S-adenosyl-L-homocysteine + H(+). Functionally, specifically methylates the uridine in position 2552 of 23S rRNA at the 2'-O position of the ribose in the fully assembled 50S ribosomal subunit. The chain is Ribosomal RNA large subunit methyltransferase E from Wolbachia pipientis wMel.